The sequence spans 319 residues: Probable cell division protein WhiA (319 aa).

Positions 278–311 (SLKELGQMLNPPVGKSGVNHRLRRLESLAEAFSR) form a DNA-binding region, H-T-H motif.

This sequence belongs to the WhiA family.

In terms of biological role, involved in cell division and chromosome segregation. This Heliobacterium modesticaldum (strain ATCC 51547 / Ice1) protein is Probable cell division protein WhiA.